The chain runs to 344 residues: Aurora kinase B (344 aa).

Phosphothreonine is present on Thr-35. A Phosphoserine modification is found at Ser-62. At Thr-64 the chain carries Phosphothreonine. The Protein kinase domain maps to Phe-77 to Val-327. ATP-binding positions include Leu-83–Val-91 and Lys-106. Asp-200 (proton acceptor) is an active-site residue. Lys-215 carries the N6-acetyllysine modification. Residue Ser-227 is modified to Phosphoserine. Phosphothreonine; by autocatalysis is present on Thr-232.

It belongs to the protein kinase superfamily. Ser/Thr protein kinase family. Aurora subfamily. In terms of assembly, component of the chromosomal passenger complex (CPC) composed of at least BIRC5/survivin, CDCA8/borealin, INCENP, AURKB or AURKC; predominantly independent AURKB- and AURKC-containing complexes exist. Associates with RACGAP1 during M phase. Interacts with SPDYC; this interaction may be required for proper localization of active, Thr-232-phosphorylated AURKB form during prometaphase and metaphase. Interacts with p53/TP53. Interacts (via the middle kinase domain) with NOC2L (via the N- and C-terminus domains). Interacts with CDCA1. Interacts with EVI5. Interacts with JTB. Interacts with NDC80. Interacts with PSMA3. Interacts with RNF2/RING1B. Interacts with SEPTIN1. Interacts with SIRT2. Interacts with TACC1. Interacts with TTC28. Post-translationally, the phosphorylation of Thr-232 requires the binding to INCENP and occurs by means of an autophosphorylation mechanism. Thr-232 phosphorylation is indispensable for the AURKB kinase activity. In terms of processing, acetylated at Lys-215 by KAT5 at kinetochores, increasing AURKB activity and promoting accurate chromosome segregation in mitosis. Ubiquitinated by different BCR (BTB-CUL3-RBX1) E3 ubiquitin ligase complexes. Ubiquitinated by the BCR(KLHL9-KLHL13) E3 ubiquitin ligase complex, ubiquitination leads to removal from mitotic chromosomes and is required for cytokinesis. During anaphase, the BCR(KLHL21) E3 ubiquitin ligase complex recruits the CPC complex from chromosomes to the spindle midzone and mediates the ubiquitination of AURKB. Ubiquitination of AURKB by BCR(KLHL21) E3 ubiquitin ligase complex may not lead to its degradation by the proteasome. Deubiquitinated by USP35; inhibiting CDH1-mediated degradation of AURKB.

It localises to the nucleus. It is found in the chromosome. The protein resides in the centromere. Its subcellular location is the kinetochore. The protein localises to the cytoplasm. It localises to the cytoskeleton. It is found in the spindle. The protein resides in the midbody. The enzyme catalyses L-seryl-[protein] + ATP = O-phospho-L-seryl-[protein] + ADP + H(+). It carries out the reaction L-threonyl-[protein] + ATP = O-phospho-L-threonyl-[protein] + ADP + H(+). Its activity is regulated as follows. Activity is greatly increased when AURKB is within the CPC complex. In particular, AURKB-phosphorylated INCENP acts as an activator of AURKB. Positive feedback between HASPIN and AURKB contributes to CPC localization. Its function is as follows. Serine/threonine-protein kinase component of the chromosomal passenger complex (CPC), a complex that acts as a key regulator of mitosis. The CPC complex has essential functions at the centromere in ensuring correct chromosome alignment and segregation and is required for chromatin-induced microtubule stabilization and spindle assembly. Involved in the bipolar attachment of spindle microtubules to kinetochores and is a key regulator for the onset of cytokinesis during mitosis. Required for central/midzone spindle assembly and cleavage furrow formation. Key component of the cytokinesis checkpoint, a process required to delay abscission to prevent both premature resolution of intercellular chromosome bridges and accumulation of DNA damage: phosphorylates CHMP4C, leading to retain abscission-competent VPS4 (VPS4A and/or VPS4B) at the midbody ring until abscission checkpoint signaling is terminated at late cytokinesis. AURKB phosphorylates the CPC complex subunits BIRC5/survivin, CDCA8/borealin and INCENP. Phosphorylation of INCENP leads to increased AURKB activity. Other known AURKB substrates involved in centromeric functions and mitosis are CENPA, DES/desmin, GPAF, KIF2C, NSUN2, RACGAP1, SEPTIN1, VIM/vimentin, HASPIN, and histone H3. A positive feedback loop involving HASPIN and AURKB contributes to localization of CPC to centromeres. Phosphorylation of VIM controls vimentin filament segregation in cytokinetic process, whereas histone H3 is phosphorylated at 'Ser-10' and 'Ser-28' during mitosis (H3S10ph and H3S28ph, respectively). AURKB is also required for kinetochore localization of BUB1 and SGO1. Phosphorylation of p53/TP53 negatively regulates its transcriptional activity. Key regulator of active promoters in resting B- and T-lymphocytes: acts by mediating phosphorylation of H3S28ph at active promoters in resting B-cells, inhibiting RNF2/RING1B-mediated ubiquitination of histone H2A and enhancing binding and activity of the USP16 deubiquitinase at transcribed genes. Acts as an inhibitor of CGAS during mitosis: catalyzes phosphorylation of the N-terminus of CGAS during the G2-M transition, blocking CGAS liquid phase separation and activation, and thereby preventing CGAS-induced autoimmunity. Phosphorylates KRT5 during anaphase and telophase. Phosphorylates ATXN10 which promotes phosphorylation of ATXN10 by PLK1 and may play a role in the regulation of cytokinesis and stimulating the proteasomal degradation of ATXN10. The protein is Aurora kinase B (AURKB) of Sus scrofa (Pig).